Here is a 397-residue protein sequence, read N- to C-terminus: DNA-directed RNA polymerase subunit Rpo1C (397 aa).

It belongs to the RNA polymerase beta' chain family. In terms of assembly, part of the RNA polymerase complex.

The protein resides in the cytoplasm. The enzyme catalyses RNA(n) + a ribonucleoside 5'-triphosphate = RNA(n+1) + diphosphate. Its function is as follows. DNA-dependent RNA polymerase (RNAP) catalyzes the transcription of DNA into RNA using the four ribonucleoside triphosphates as substrates. Forms part of the jaw domain. In Methanosarcina acetivorans (strain ATCC 35395 / DSM 2834 / JCM 12185 / C2A), this protein is DNA-directed RNA polymerase subunit Rpo1C.